A 103-amino-acid polypeptide reads, in one-letter code: Large ribosomal subunit protein uL22c (103 aa).

It belongs to the universal ribosomal protein uL22 family. As to quaternary structure, part of the 50S ribosomal subunit.

Its subcellular location is the plastid. It is found in the chloroplast. This protein binds specifically to 23S rRNA. Functionally, the globular domain of the protein is located near the polypeptide exit tunnel on the outside of the subunit, while an extended beta-hairpin is found that lines the wall of the exit tunnel in the center of the 70S ribosome. The chain is Large ribosomal subunit protein uL22c (rpl22) from Cyanidium caldarium (Red alga).